Here is an 823-residue protein sequence, read N- to C-terminus: Putative E3 ubiquitin-protein ligase RF4 (823 aa).

Disordered stretches follow at residues 24 to 72, 224 to 291, and 432 to 464; these read TVSP…NGSV, SKLS…CSGS, and ESVT…SEEK. Over residues 61 to 72 the composition is skewed to polar residues; sequence KPQNHLSGNGSV. Positions 224–240 are enriched in low complexity; sequence SKLSDSESLGAESNPPK. The segment covering 267–282 has biased composition (polar residues); it reads FPNTPNSKKTQSSGTT. Residues 453–464 are compositionally biased toward basic and acidic residues; the sequence is SEKKSGSESEEK. Positions 536–738 form a coiled coil; it reads ELKALRKERE…ELKLKSDYSR (203 aa). Residues 768–808 form an RING-type zinc finger; that stretch reads CVMCLSEEMSVIFLPCAHQVLCFKCNQLHEKEGMMDCPSCR.

This sequence belongs to the RING-type zinc finger family.

The catalysed reaction is S-ubiquitinyl-[E2 ubiquitin-conjugating enzyme]-L-cysteine + [acceptor protein]-L-lysine = [E2 ubiquitin-conjugating enzyme]-L-cysteine + N(6)-ubiquitinyl-[acceptor protein]-L-lysine.. The protein operates within protein modification; protein ubiquitination. In Arabidopsis thaliana (Mouse-ear cress), this protein is Putative E3 ubiquitin-protein ligase RF4 (RF4).